Consider the following 256-residue polypeptide: Nuclear shuttle protein (256 aa).

Residues 1–53 (MYPSRNKRGSYFNQRRQYSRNHVWKRPTAAKRHDWKRRPSNTSKPNDEPKMSA) are disordered. Over residues 17–39 (QYSRNHVWKRPTAAKRHDWKRRP) the composition is skewed to basic residues. Residues 21–42 (NHVWKRPTAAKRHDWKRRPSNT) carry the Bipartite nuclear localization signal motif. A Nuclear localization signal motif is present at residues 81 to 96 (DLGRSEPNRSRSYIRL). Positions 150–187 (ELFGARIHSHGNLSVTPALKDRYYIRHVCKRVLSVEKD) are interaction with Arabidopsis thaliana NSI protein.

The protein belongs to the begomovirus nuclear shuttle protein family. As to quaternary structure, binds to single-stranded and double-stranded viral DNA. Interacts with the host nuclear shuttle interacting (NSI) protein. This interaction may allow NSP to recruit NSI monomers to the viral genome and thus regulate nuclear export of viral genome by NSP.

Its subcellular location is the host nucleus. The protein resides in the host cytoplasm. It is found in the host cell membrane. Functionally, binds to the genomic viral ssDNA, shuttles it into and out of the cell nucleus. Begomoviruses use 2 proteins to transport their DNA from cell to cell. The nuclear shuttle protein (NSP) shuttles it between nucleus and cytoplasm and the movement protein (MP) probably transports the DNA-NSP complex to the cell periphery and facilitates movement across the cell wall. This Abutilon mosaic virus (isolate West India) (AbMV) protein is Nuclear shuttle protein.